Reading from the N-terminus, the 569-residue chain is Glutamate--tRNA ligase (569 aa).

The short motif at Pro-107–His-117 is the 'HIGH' region element.

It belongs to the class-I aminoacyl-tRNA synthetase family. Glutamate--tRNA ligase type 2 subfamily.

The protein localises to the cytoplasm. It catalyses the reaction tRNA(Glu) + L-glutamate + ATP = L-glutamyl-tRNA(Glu) + AMP + diphosphate. Functionally, catalyzes the attachment of glutamate to tRNA(Glu) in a two-step reaction: glutamate is first activated by ATP to form Glu-AMP and then transferred to the acceptor end of tRNA(Glu). This is Glutamate--tRNA ligase from Nitrosopumilus maritimus (strain SCM1).